The following is a 387-amino-acid chain: 3-ketoacyl-CoA thiolase (387 aa).

Catalysis depends on Cys-91, which acts as the Acyl-thioester intermediate. Residues His-343 and Cys-373 each act as proton acceptor in the active site.

Belongs to the thiolase-like superfamily. Thiolase family. As to quaternary structure, heterotetramer of two alpha chains (FadB) and two beta chains (FadA).

The protein resides in the cytoplasm. The catalysed reaction is an acyl-CoA + acetyl-CoA = a 3-oxoacyl-CoA + CoA. It participates in lipid metabolism; fatty acid beta-oxidation. Its function is as follows. Catalyzes the final step of fatty acid oxidation in which acetyl-CoA is released and the CoA ester of a fatty acid two carbons shorter is formed. The polypeptide is 3-ketoacyl-CoA thiolase (Shewanella baltica (strain OS155 / ATCC BAA-1091)).